A 329-amino-acid polypeptide reads, in one-letter code: Replication factor C small subunit (329 aa).

51-58 (GPPGTGKT) serves as a coordination point for ATP.

Belongs to the activator 1 small subunits family. RfcS subfamily. As to quaternary structure, heteromultimer composed of small subunits (RfcS) and large subunits (RfcL).

Functionally, part of the RFC clamp loader complex which loads the PCNA sliding clamp onto DNA. This chain is Replication factor C small subunit, found in Staphylothermus marinus (strain ATCC 43588 / DSM 3639 / JCM 9404 / F1).